A 94-amino-acid polypeptide reads, in one-letter code: Selenoprotein K (94 aa).

A helical transmembrane segment spans residues 20–42 (LSFITDFFWGIAEFVVLFFRTLL). Positions 48 to 94 (KRRGYGGSSDSRYDDGRGPPGNPPRRMGRINHLRGPNPPPMAGGUGR) are disordered. Position 92 (selenocysteine 92) is a non-standard amino acid, selenocysteine.

It belongs to the selenoprotein K family. In terms of assembly, interacts with DERL1, DERL2, DERL3 and SELENOS. The SELENOK-SELENOS complex interacts with VCP. Interacts with ZDHHC6. Cleaved by CAPN2/m-calpain in resting macrophages but not in activated macrophages. Macrophage activation up-regulates expression of the calpain inhibitor CAST/calpastatin, resulting in inhibition of CAPN2 activity. Post-translationally, truncated SELENOK proteins produced by failed UGA/Sec decoding are ubiquitinated by the CRL2(KLHDC2) complex, which recognizes the diglycine (Gly-Gly) at the C-terminus of truncated SELENOK proteins.

The protein localises to the endoplasmic reticulum membrane. Its subcellular location is the cell membrane. Functionally, required for Ca(2+) flux in immune cells and plays a role in T-cell proliferation and in T-cell and neutrophil migration. Involved in endoplasmic reticulum-associated degradation (ERAD) of soluble glycosylated proteins. Required for palmitoylation and cell surface expression of CD36 and involved in macrophage uptake of low-density lipoprotein and in foam cell formation. Together with ZDHHC6, required for palmitoylation of ITPR1 in immune cells, leading to regulate ITPR1 stability and function. Plays a role in protection of cells from ER stress-induced apoptosis. Protects cells from oxidative stress when overexpressed in cardiomyocytes. The protein is Selenoprotein K of Sus scrofa (Pig).